A 393-amino-acid polypeptide reads, in one-letter code: Putative amino-acid ABC transporter permease protein YhdX (393 aa).

8 consecutive transmembrane segments (helical) span residues 21–41, 92–112, 128–148, 180–200, 219–239, 256–276, 333–353, and 363–383; these read AWLF…WLFH, LLVS…IGLA, IEIF…FAVL, DGFI…VGLF, IAAV…GAAL, VLIP…SAFI, SSLA…GTVL, and IAMT…LMNI. One can recognise an ABC transmembrane type-1 domain in the interval 88–381; the sequence is LLNTLLVSAL…IISLTISLLM (294 aa).

This sequence belongs to the binding-protein-dependent transport system permease family. HisMQ subfamily.

Its subcellular location is the cell inner membrane. In terms of biological role, probably part of the binding-protein-dependent transport system YdhWXYZ for an amino acid; probably responsible for the translocation of the substrate across the membrane. The chain is Putative amino-acid ABC transporter permease protein YhdX (yhdX) from Escherichia coli (strain K12).